Here is a 559-residue protein sequence, read N- to C-terminus: Cytokine-like nuclear factor N-PAC (559 aa).

The PWWP domain maps to 9–70 (VNDLVWAKMK…ETQIKPYQEF (62 aa)). Residues 106 to 137 (SEQDNRPDPDVEFNKLREGGTESGEETTVNNT) are disordered. Residues 108–125 (QDNRPDPDVEFNKLREGG) show a composition bias toward basic and acidic residues. Residues 267–559 (RNIQASNLKF…SSAVYVRARF (293 aa)) form a dehydrogenase domain region. Residues 277–291 (GFLG…MVKN) and K511 contribute to the NAD(+) site.

This sequence belongs to the HIBADH-related family. NP60 subfamily. Binds to mononucleosomes.

It is found in the chromosome. Functionally, nucleosome-destabilizing factor that is recruited to genes during transcriptional activation and colocalizes with a subset of trimethylated 'Lys-36' histone H3 (H3K36me3)-enriched regions. The polypeptide is Cytokine-like nuclear factor N-PAC (Aedes aegypti (Yellowfever mosquito)).